The sequence spans 235 residues: Regulator of G-protein signaling 18 (235 aa).

At S49 the chain carries Phosphoserine. In terms of domain architecture, RGS spans 86–202; it reads SFDKLLSHRD…LKSETYLHLI (117 aa). A phosphoserine mark is found at S216 and S218.

In terms of tissue distribution, expressed in bone marrow, spleen, fetal liver and lung. At very low levels expressed in heart.

It localises to the cytoplasm. Functionally, inhibits signal transduction by increasing the GTPase activity of G protein alpha subunits thereby driving them into their inactive GDP-bound form. Binds to G(i) alpha-1, G(i) alpha-2, G(i) alpha-3 and G(q) alpha. This Mus musculus (Mouse) protein is Regulator of G-protein signaling 18 (Rgs18).